The primary structure comprises 177 residues: ATP synthase subunit delta (177 aa).

This sequence belongs to the ATPase delta chain family. F-type ATPases have 2 components, F(1) - the catalytic core - and F(0) - the membrane proton channel. F(1) has five subunits: alpha(3), beta(3), gamma(1), delta(1), epsilon(1). F(0) has three main subunits: a(1), b(2) and c(10-14). The alpha and beta chains form an alternating ring which encloses part of the gamma chain. F(1) is attached to F(0) by a central stalk formed by the gamma and epsilon chains, while a peripheral stalk is formed by the delta and b chains.

It localises to the cell inner membrane. Functionally, f(1)F(0) ATP synthase produces ATP from ADP in the presence of a proton or sodium gradient. F-type ATPases consist of two structural domains, F(1) containing the extramembraneous catalytic core and F(0) containing the membrane proton channel, linked together by a central stalk and a peripheral stalk. During catalysis, ATP synthesis in the catalytic domain of F(1) is coupled via a rotary mechanism of the central stalk subunits to proton translocation. This protein is part of the stalk that links CF(0) to CF(1). It either transmits conformational changes from CF(0) to CF(1) or is implicated in proton conduction. In Herminiimonas arsenicoxydans, this protein is ATP synthase subunit delta.